The following is a 110-amino-acid chain: Iron-sulfur cluster assembly protein CyaY (110 aa).

This sequence belongs to the frataxin family.

Its function is as follows. Involved in iron-sulfur (Fe-S) cluster assembly. May act as a regulator of Fe-S biogenesis. This Pseudomonas syringae pv. tomato (strain ATCC BAA-871 / DC3000) protein is Iron-sulfur cluster assembly protein CyaY.